The following is a 667-amino-acid chain: WD repeat-containing protein 48 homolog (667 aa).

WD repeat units follow at residues 26-65, 71-110, 113-152, 164-203, 206-245, 248-287, 290-329, and 350-389; these read QHRN…NEKY, HHND…CMST, THRD…ALTA, GSKD…RSMK, GHTE…CVQT, VHKE…NKML, EEQA…RCTL, and KGGA…KKEQ. Residues 591–615 are disordered; it reads ETTPSGGNANNSLQNSQSDANSEGS.

It belongs to the WD repeat WDR48 family. Catalytic component of the Usp12-46 deubiquitylase complex consisting of Usp12-46, Wdr20 and Uaf1; regulatory subunit that, together wtih Wdr20, stabilizes Usp12-46. The Usp12-46 deubiquitylase complex associates with arr/arrow; the interaction leads to deubiquitination and stabilization of arr/arrow.

Functionally, regulatory component of the Usp12-46 deubiquitylase complex. activates deubiquitination by increasing the catalytic turnover without increasing the affinity of deubiquitinating enzymes for the substrate. The complex deubiquitylates the wg/wingless-signaling receptor arr/arrow, which stabilizes the receptor and increases its concentration at the cell surface; this enhances the sensitivity of cells to wg/wingless-signal stimulation. This increases the amplitude and spatial range of the signaling response to the wg/wingless morphogen gradient, facilitating the precise concentration-dependent regulation of its target genes. Together with Wdr20 and Usp12-46 required for wg/wingless-mediated signaling in the wing imaginal disc and for wg/wingless-dependent regulation of intestinal stem cell proliferation. The polypeptide is WD repeat-containing protein 48 homolog (Drosophila ananassae (Fruit fly)).